Reading from the N-terminus, the 328-residue chain is Malate dehydrogenase (328 aa).

11-17 (GAAGQIG) contacts NAD(+). Residues R94 and R100 each contribute to the substrate site. NAD(+)-binding positions include N107, Q114, and 131–133 (VGN). Residues N133 and R164 each coordinate substrate. Residue H189 is the Proton acceptor of the active site.

This sequence belongs to the LDH/MDH superfamily. MDH type 2 family.

The enzyme catalyses (S)-malate + NAD(+) = oxaloacetate + NADH + H(+). Functionally, catalyzes the reversible oxidation of malate to oxaloacetate. This Xanthomonas oryzae pv. oryzae (strain PXO99A) protein is Malate dehydrogenase.